We begin with the raw amino-acid sequence, 44 residues long: Poly-ADP-ribosylation-amplifying and CtIP-maintaining micropeptide (44 aa).

A disordered region spans residues Met1–Leu44. Residues Pro24 to Leu44 are compositionally biased toward basic residues.

In terms of assembly, interacts with KLHL15; preventing ubiquitination and degradation of RBBP8/CtIP. Interacts with PARP1.

The protein resides in the nucleus. Its subcellular location is the nucleolus. It localises to the chromosome. In terms of biological role, micropeptide that acts as a regulator of DNA repair both by preventing KLHL15-mediated ubiquitination and degradation of RBBP8/CtIP, and by promoting the poly-ADP-ribosyltransferase activity of PARP1. Prevents KLHL15-mediated ubiquitination of RBBP8/CtIP by competitively blocking the association between KLHL15 and RBBP8/CtIP. Recruited to DNA damage sites via association with poly-ADP-ribose chains, and enhances the poly-ADP-ribosyltransferase activity of PARP1. This chain is Poly-ADP-ribosylation-amplifying and CtIP-maintaining micropeptide, found in Homo sapiens (Human).